A 413-amino-acid polypeptide reads, in one-letter code: Phosphoglycerate kinase (413 aa).

Substrate is bound by residues 24–26 (DFN), Arg39, 62–65 (HLSR), Arg123, and Arg165. Residues Lys216, Glu343, and 369-372 (GGDS) each bind ATP.

Belongs to the phosphoglycerate kinase family. As to quaternary structure, monomer.

Its subcellular location is the cytoplasm. The enzyme catalyses (2R)-3-phosphoglycerate + ATP = (2R)-3-phospho-glyceroyl phosphate + ADP. Its pathway is carbohydrate degradation; glycolysis; pyruvate from D-glyceraldehyde 3-phosphate: step 2/5. The sequence is that of Phosphoglycerate kinase from Mycoplasmoides gallisepticum (strain R(low / passage 15 / clone 2)) (Mycoplasma gallisepticum).